The chain runs to 122 residues: Large ribosomal subunit protein uL14 (122 aa).

The protein belongs to the universal ribosomal protein uL14 family. Part of the 50S ribosomal subunit. Forms a cluster with proteins L3 and L19. In the 70S ribosome, L14 and L19 interact and together make contacts with the 16S rRNA in bridges B5 and B8.

Binds to 23S rRNA. Forms part of two intersubunit bridges in the 70S ribosome. This chain is Large ribosomal subunit protein uL14, found in Acinetobacter baumannii (strain SDF).